A 250-amino-acid polypeptide reads, in one-letter code: uncharacterized protein (250 aa).

6 residues coordinate NAD(+): Ser-15, Leu-17, Asp-36, Asp-56, Val-57, and Cys-82. Ser-143 is a binding site for substrate. Residues Tyr-156, Lys-160, Phe-189, and Thr-191 each coordinate NAD(+). The Proton acceptor role is filled by Tyr-156.

Belongs to the short-chain dehydrogenases/reductases (SDR) family.

This is an uncharacterized protein from Mycobacterium tuberculosis (strain CDC 1551 / Oshkosh).